Here is a 95-residue protein sequence, read N- to C-terminus: Large ribosomal subunit protein uL23 (95 aa).

This sequence belongs to the universal ribosomal protein uL23 family. Part of the 50S ribosomal subunit. Contacts protein L29.

Its function is as follows. Binds to 23S rRNA. One of the proteins that surrounds the polypeptide exit tunnel on the outside of the ribosome. This Methanopyrus kandleri (strain AV19 / DSM 6324 / JCM 9639 / NBRC 100938) protein is Large ribosomal subunit protein uL23.